The chain runs to 579 residues: Adenine deaminase (579 aa).

It belongs to the metallo-dependent hydrolases superfamily. Adenine deaminase family. Requires Mn(2+) as cofactor.

It catalyses the reaction adenine + H2O + H(+) = hypoxanthine + NH4(+). The protein is Adenine deaminase of Listeria innocua serovar 6a (strain ATCC BAA-680 / CLIP 11262).